The primary structure comprises 361 residues: 4-oxalomesaconate tautomerase (361 aa).

It belongs to the PrpF family.

The enzyme catalyses (1E)-4-oxobut-1-ene-1,2,4-tricarboxylate = 4-carboxy-2-hydroxy-cis,cis-muconate. Functionally, catalyzes the tautomerization of the 4-oxalomesaconic acid keto (OMAketo) generated by GalA dioxygenase to 4-oxalomesaconic acid enol (OMAenol). Mediates the second step in gallate degradation pathway. The polypeptide is 4-oxalomesaconate tautomerase (galD) (Pseudomonas putida (strain ATCC 47054 / DSM 6125 / CFBP 8728 / NCIMB 11950 / KT2440)).